The sequence spans 196 residues: Peroxynitrite isomerase (196 aa).

The segment at 1–29 (MSDENPLQPPWLNAPPVDPYPYEESHDLR) is disordered. The span at 7–19 (LQPPWLNAPPVDP) shows a compositional bias: pro residues. Residues 46-52 (GVWRGRG) carry the GXWXGXG motif. H186 serves as a coordination point for heme b.

It belongs to the nitrobindin family. As to quaternary structure, homodimer. It depends on heme b as a cofactor.

It catalyses the reaction peroxynitrite = nitrate. The protein operates within nitrogen metabolism. In terms of biological role, heme-binding protein able to scavenge peroxynitrite and to protect free L-tyrosine against peroxynitrite-mediated nitration, by acting as a peroxynitrite isomerase that converts peroxynitrite to nitrate. Therefore, this protein likely plays a role in peroxynitrite sensing and in the detoxification of reactive nitrogen and oxygen species (RNS and ROS, respectively). Is able to bind nitric oxide (NO) in vitro, but may act as a sensor of peroxynitrite levels in vivo. The protein is Peroxynitrite isomerase of Salinispora arenicola (strain CNS-205).